The following is a 444-amino-acid chain: Ribosomal protein uS12 methylthiotransferase RimO (444 aa).

The region spanning 2–118 (PSIGLLSLGC…IVEVVNHALE (117 aa)) is the MTTase N-terminal domain. 6 residues coordinate [4Fe-4S] cluster: C11, C47, C81, C156, C160, and C163. The Radical SAM core domain maps to 142-372 (STPSYTAYVK…MKLQREISLS (231 aa)). The TRAM domain maps to 375 to 444 (QKRIGQEIEV…EYDLMGELAQ (70 aa)).

Belongs to the methylthiotransferase family. RimO subfamily. [4Fe-4S] cluster is required as a cofactor.

It localises to the cytoplasm. It carries out the reaction L-aspartate(89)-[ribosomal protein uS12]-hydrogen + (sulfur carrier)-SH + AH2 + 2 S-adenosyl-L-methionine = 3-methylsulfanyl-L-aspartate(89)-[ribosomal protein uS12]-hydrogen + (sulfur carrier)-H + 5'-deoxyadenosine + L-methionine + A + S-adenosyl-L-homocysteine + 2 H(+). Catalyzes the methylthiolation of an aspartic acid residue of ribosomal protein uS12. In Desulforamulus reducens (strain ATCC BAA-1160 / DSM 100696 / MI-1) (Desulfotomaculum reducens), this protein is Ribosomal protein uS12 methylthiotransferase RimO.